The following is a 284-amino-acid chain: 4-diphosphocytidyl-2-C-methyl-D-erythritol kinase (284 aa).

Lys14 is a catalytic residue. An ATP-binding site is contributed by 98 to 108 (PMGGGLGGGSS). Asp140 is a catalytic residue.

The protein belongs to the GHMP kinase family. IspE subfamily.

The enzyme catalyses 4-CDP-2-C-methyl-D-erythritol + ATP = 4-CDP-2-C-methyl-D-erythritol 2-phosphate + ADP + H(+). The protein operates within isoprenoid biosynthesis; isopentenyl diphosphate biosynthesis via DXP pathway; isopentenyl diphosphate from 1-deoxy-D-xylulose 5-phosphate: step 3/6. Its function is as follows. Catalyzes the phosphorylation of the position 2 hydroxy group of 4-diphosphocytidyl-2C-methyl-D-erythritol. This chain is 4-diphosphocytidyl-2-C-methyl-D-erythritol kinase, found in Shewanella sp. (strain ANA-3).